The primary structure comprises 450 residues: Equilibrative nucleotide transporter 1 (450 aa).

11 helical membrane passes run 63 to 83 (FAYI…NAFI), 101 to 121 (IFAV…VVFY), 133 to 153 (LGLL…LVYV), 168 to 188 (AAVA…IGVA), 196 to 216 (MQAV…LRIL), 234 to 254 (LYFA…NVAH), 300 to 320 (HGFG…GYIT), 334 to 354 (ILLI…TAVF), 361 to 381 (IAVG…GCLH), 394 to 414 (ILTC…MILA), and 430 to 450 (TVMF…FWVI).

This sequence belongs to the SLC29A/ENT transporter (TC 2.A.57) family. In terms of tissue distribution, in young seedlings, expressed in root elongation zone, root cortex, root-hair, at the transition to the shoot and cotyledons. Expressed in hydathodes of fully developed leaves and pollen.

Its subcellular location is the vacuole membrane. In terms of biological role, nucleoside transporter involved in adenosine transport and required for nucleotide metabolism which influences growth and pollen germination. Has high affinity for adenosine when expressed in a heterologous system (yeast). The protein is Equilibrative nucleotide transporter 1 (ENT1) of Arabidopsis thaliana (Mouse-ear cress).